Reading from the N-terminus, the 163-residue chain is Nucleotide-binding protein AM1_1863 (163 aa).

Belongs to the YajQ family.

Functionally, nucleotide-binding protein. The sequence is that of Nucleotide-binding protein AM1_1863 from Acaryochloris marina (strain MBIC 11017).